A 327-amino-acid chain; its full sequence is MSSQFDQLKLWSVLVGDSGDPDLIKTLDVQDATTNPSLILKVAQEPKYQSMLTEAISWGIRQNGDDVQTLTFVLDKIQVNLGLEILKYVPGRVSLEIDARLSFNTEAMVQRAIFLSQLFEKMGGDKKRLLIKIPGTWEGIRAAEVLENQGIACNVTLIFSLVQAIAAAKAKVTLVSPFVGRIYDWWIAAYGAEGYSIEADPGVASVANIYSYYKKFDIPTQIMAASFRTKEQVLALAGCDFLTISPKILEELKKEQQPVERKLSVEEAKKLDIQPVELSESVFRFLMNEDAMATEKLAEGIRIFSGDTQILESAVTEFIRQIAAQEA.

The active-site Schiff-base intermediate with substrate is K132.

Belongs to the transaldolase family. Type 1 subfamily.

Its subcellular location is the cytoplasm. The enzyme catalyses D-sedoheptulose 7-phosphate + D-glyceraldehyde 3-phosphate = D-erythrose 4-phosphate + beta-D-fructose 6-phosphate. It participates in carbohydrate degradation; pentose phosphate pathway; D-glyceraldehyde 3-phosphate and beta-D-fructose 6-phosphate from D-ribose 5-phosphate and D-xylulose 5-phosphate (non-oxidative stage): step 2/3. Its function is as follows. Transaldolase is important for the balance of metabolites in the pentose-phosphate pathway. The protein is Transaldolase of Chlamydia muridarum (strain MoPn / Nigg).